The primary structure comprises 318 residues: NADH-ubiquinone oxidoreductase chain 1 (318 aa).

Transmembrane regions (helical) follow at residues Phe-2–Leu-22, Ile-68–Pro-88, Leu-100–Gly-120, Leu-146–Ile-166, His-171–Ala-191, Leu-222–Phe-242, Glu-253–Val-273, and Leu-294–Ile-314.

It belongs to the complex I subunit 1 family.

The protein localises to the mitochondrion inner membrane. It catalyses the reaction a ubiquinone + NADH + 5 H(+)(in) = a ubiquinol + NAD(+) + 4 H(+)(out). Core subunit of the mitochondrial membrane respiratory chain NADH dehydrogenase (Complex I) that is believed to belong to the minimal assembly required for catalysis. Complex I functions in the transfer of electrons from NADH to the respiratory chain. The immediate electron acceptor for the enzyme is believed to be ubiquinone. The chain is NADH-ubiquinone oxidoreductase chain 1 (MT-ND1) from Coelops frithii (East Asian tailless leaf-nosed bat).